A 303-amino-acid polypeptide reads, in one-letter code: Cytochrome c oxidase subunit 2 (303 aa).

The signal sequence occupies residues 1-25; the sequence is MRHSTTLTGCATGAAGLLAATAAAA. The next 2 membrane-spanning stretches (helical) occupy residues 60–80 and 104–124; these read FILVIIAAITIFVTLLILYAV and WTIVPIVILVAIGAFSLPVLF. Residues H217, C252, C256, and H260 each coordinate Cu cation.

The protein belongs to the cytochrome c oxidase subunit 2 family. Cu cation is required as a cofactor.

It localises to the cell membrane. It carries out the reaction 4 Fe(II)-[cytochrome c] + O2 + 8 H(+)(in) = 4 Fe(III)-[cytochrome c] + 2 H2O + 4 H(+)(out). Its function is as follows. Subunits I and II form the functional core of the enzyme complex. Electrons originating in cytochrome c are transferred via heme a and Cu(A) to the binuclear center formed by heme a3 and Cu(B). The polypeptide is Cytochrome c oxidase subunit 2 (ctaC) (Cereibacter sphaeroides (Rhodobacter sphaeroides)).